Consider the following 365-residue polypeptide: UDP-N-acetylglucosamine--N-acetylmuramyl-(pentapeptide) pyrophosphoryl-undecaprenol N-acetylglucosamine transferase (365 aa).

Residues 19–21 (TGG), N131, R170, S201, I255, 274–279 (ALTVTE), and Q300 each bind UDP-N-acetyl-alpha-D-glucosamine.

It belongs to the glycosyltransferase 28 family. MurG subfamily.

The protein localises to the cell inner membrane. It catalyses the reaction di-trans,octa-cis-undecaprenyl diphospho-N-acetyl-alpha-D-muramoyl-L-alanyl-D-glutamyl-meso-2,6-diaminopimeloyl-D-alanyl-D-alanine + UDP-N-acetyl-alpha-D-glucosamine = di-trans,octa-cis-undecaprenyl diphospho-[N-acetyl-alpha-D-glucosaminyl-(1-&gt;4)]-N-acetyl-alpha-D-muramoyl-L-alanyl-D-glutamyl-meso-2,6-diaminopimeloyl-D-alanyl-D-alanine + UDP + H(+). Its pathway is cell wall biogenesis; peptidoglycan biosynthesis. In terms of biological role, cell wall formation. Catalyzes the transfer of a GlcNAc subunit on undecaprenyl-pyrophosphoryl-MurNAc-pentapeptide (lipid intermediate I) to form undecaprenyl-pyrophosphoryl-MurNAc-(pentapeptide)GlcNAc (lipid intermediate II). The polypeptide is UDP-N-acetylglucosamine--N-acetylmuramyl-(pentapeptide) pyrophosphoryl-undecaprenol N-acetylglucosamine transferase (Acinetobacter baumannii (strain ACICU)).